A 162-amino-acid chain; its full sequence is Large ribosomal subunit protein uL15 (162 aa).

Basic and acidic residues predominate over residues 1-13; it reads MKLNEIRDNEGAT. The tract at residues 1–37 is disordered; it reads MKLNEIRDNEGATKNRMRVGRGIGSGKGKTAGRGVKG. A compositionally biased stretch (gly residues) spans 21–35; sequence RGIGSGKGKTAGRGV.

Belongs to the universal ribosomal protein uL15 family. Part of the 50S ribosomal subunit.

Binds to the 23S rRNA. The protein is Large ribosomal subunit protein uL15 of Methylobacterium nodulans (strain LMG 21967 / CNCM I-2342 / ORS 2060).